The following is a 571-amino-acid chain: MDRAVSRVALENEEREAKNTWRFVFRIAILLLIVITLAISAAALVYSMEASTPGDLVGIPTVISRAEEKITSALSSNQDVVDRIYKQVALESPLALLNTESVIMNAITSLSYQINGAANNSGCGAPVHDPDYIGGIGKELIVDDASDVTSFYPSAFQEHLNFIPAPTTGSGCTRIPSFDISATHYCYTHNVILSGCRDHSHSHQYLALGVLRTSATGRVFFSTLRSINLDDNQNRKSCSVSATPLGCDMLCSKITETEEEDYSSVTPTSMVHGRLGFDGQYHEKDLDVITLFKDWVANYPGVGGGSFIDNRVWFPVYGGLKPNSPSDTVQEGRYVIYKRYNDTCPDEQDYQIRMAKSSYKPGRFGGKRVQQAILSIKVSTSLGEDPVLTIPPNTVTLMGAEGRVLTVGTSHFLYQRGSSYFSPALLYPMTVNNKTATLHSPYTFNAFTRPGSVPCQASARCPNSCVTGVYTDPYPLIFHRNHTLRGVFGTMLDDGQARLNPVSAVFDNISRSRITRVSSSRTKAAYTTSTCFKVVKTNKTYVLSIAEISNTLFGEFRIVPLLVEILKNDGV.

The Intravirion portion of the chain corresponds to 1-26; the sequence is MDRAVSRVALENEEREAKNTWRFVFR. The helical transmembrane segment at 27–47 threads the bilayer; the sequence is IAILLLIVITLAISAAALVYS. Residues 48-571 lie on the Virion surface side of the membrane; the sequence is MEASTPGDLV…LVEILKNDGV (524 aa). A glycan (N-linked (GlcNAc...) asparagine; by host) is linked at Asn-119. The segment at 124–152 is important for interaction with fusion/F protein; sequence GAPVHDPDYIGGIGKELIVDDASDVTSFY. Intrachain disulfides connect Cys-172/Cys-196, Cys-186/Cys-247, and Cys-238/Cys-251. Residues 234-239 form an involved in neuraminidase activity region; that stretch reads NRKSCS. 2 N-linked (GlcNAc...) asparagine; by host glycosylation sites follow: Asn-341 and Asn-433. 2 disulfide bridges follow: Cys-344-Cys-461 and Cys-455-Cys-465. N-linked (GlcNAc...) asparagine; by host glycans are attached at residues Asn-481, Asn-508, and Asn-538.

Belongs to the paramyxoviruses hemagglutinin-neuraminidase family. In terms of assembly, homotetramer; composed of disulfide-linked homodimers. Interacts with F protein trimer. Interacts with host CG-1B; this interaction inhibits viral adsorption and replication rather than internalization.

Its subcellular location is the virion membrane. It localises to the host cell membrane. The enzyme catalyses Hydrolysis of alpha-(2-&gt;3)-, alpha-(2-&gt;6)-, alpha-(2-&gt;8)- glycosidic linkages of terminal sialic acid residues in oligosaccharides, glycoproteins, glycolipids, colominic acid and synthetic substrates.. In terms of biological role, mediates the viral entry into the host cell together with fusion/F protein. Attaches the virus to sialic acid-containing cell receptors and thereby initiates infection. Binding of HN protein to the receptor induces a conformational change that allows the F protein to trigger virion/cell membranes fusion. Functionally, neuraminidase activity ensures the efficient spread of the virus by dissociating the mature virions from the neuraminic acid containing glycoproteins. This is Hemagglutinin-neuraminidase (HN) from Gallus gallus (Chicken).